The following is a 321-amino-acid chain: D-alanine--D-alanine ligase (321 aa).

The region spanning 121–315 (RSCFLKNNIN…FTNLIEEIIK (195 aa)) is the ATP-grasp domain. 148–199 (MKRPYVIKPLKQGSSIGVEVIFEEDDFHFIDYDFPYGEDIIIEQYIQGQELQ) lines the ATP pocket. Mg(2+) contacts are provided by E268, E282, and N284.

It belongs to the D-alanine--D-alanine ligase family. Requires Mg(2+) as cofactor. The cofactor is Mn(2+).

The protein resides in the cytoplasm. It carries out the reaction 2 D-alanine + ATP = D-alanyl-D-alanine + ADP + phosphate + H(+). It participates in cell wall biogenesis; peptidoglycan biosynthesis. Cell wall formation. In Rickettsia typhi (strain ATCC VR-144 / Wilmington), this protein is D-alanine--D-alanine ligase.